We begin with the raw amino-acid sequence, 342 residues long: Phosphate acyltransferase (342 aa).

Belongs to the PlsX family. Homodimer. Probably interacts with PlsY.

The protein resides in the cytoplasm. It catalyses the reaction a fatty acyl-[ACP] + phosphate = an acyl phosphate + holo-[ACP]. Its pathway is lipid metabolism; phospholipid metabolism. In terms of biological role, catalyzes the reversible formation of acyl-phosphate (acyl-PO(4)) from acyl-[acyl-carrier-protein] (acyl-ACP). This enzyme utilizes acyl-ACP as fatty acyl donor, but not acyl-CoA. This Pelotomaculum thermopropionicum (strain DSM 13744 / JCM 10971 / SI) protein is Phosphate acyltransferase.